Reading from the N-terminus, the 782-residue chain is General transcription and DNA repair factor IIH helicase/translocase subunit XPB (782 aa).

A compositionally biased stretch (basic and acidic residues) spans Met1–Lys11. Disordered regions lie at residues Met1–Thr51 and Ser218–Lys241. The short motif at Arg6–His18 is the Nuclear localization signal element. Residues Asp21–Pro30 are compositionally biased toward acidic residues. A compositionally biased stretch (polar residues) spans Ser218 to Thr236. Residues Met327–Leu488 form the Helicase ATP-binding domain. Residue Leu340 to Ser347 coordinates ATP. A DEVH box motif is present at residues Asp441 to His444. The 161-residue stretch at Arg542–Ala702 folds into the Helicase C-terminal domain. Residues Arg642 and Arg645 each coordinate ATP. Ser686 is modified (phosphoserine). Ser751 is modified (phosphoserine; by CK2).

Belongs to the helicase family. RAD25/XPB subfamily. Component of the 7-subunit TFIIH core complex composed of XPB/ERCC3, XPD/ERCC2, GTF2H1, GTF2H2, GTF2H3, GTF2H4 and GTF2H5, which is active in NER. The core complex associates with the 3-subunit CDK-activating kinase (CAK) module composed of CCNH/cyclin H, CDK7 and MNAT1 to form the 10-subunit holoenzyme (holo-TFIIH) active in transcription. Interacts with PUF60. Interacts with ATF7IP. Interacts with KAT2A; leading to KAT2A recruitment to promoters and acetylation of histones. Part of TBP-based Pol II pre-initiation complex (PIC), in which Pol II core assembles with general transcription factors and other specific initiation factors including GTF2E1, GTF2E2, GTF2F1, GTF2F2, TCEA1, ERCC2, ERCC3, GTF2H2, GTF2H3, GTF2H4, GTF2H5, GTF2A1, GTF2A2, GTF2B and TBP; this large multi-subunit PIC complex mediates DNA unwinding and targets Pol II core to the transcription start site where the first phosphodiester bond forms. In terms of assembly, (Microbial infection) Interacts with Epstein-Barr virus EBNA2. Phosphorylation on Ser-751 by CK2 controls the 5'-excision activity of ERCC1-XPF endonuclease; phosphorylated protein inhibits the excision activity and thus NER. Dephosphorylation reactivates the 5'-excision step. Phosphorylation has no effect on transcription or the 3'-5' helicase activity.

The protein localises to the nucleus. It catalyses the reaction Couples ATP hydrolysis with the unwinding of duplex DNA by translocating in the 3'-5' direction.. The catalysed reaction is ATP + H2O = ADP + phosphate + H(+). With respect to regulation, phosphorylation on Ser-751 by CK2 controls the 5'-excision activity of ERCC1-XPF endonuclease; phosphorylated protein inhibits the excision activity and thus NER. ATPase activity is stimulated by TFIIH subunit p52 (GTF2H4). DNA translocase activity by this subunit in TFIIH is stimulated by XPA, ERCC5/XPG and XFP plus ERCC1; translocase activity is sensitive to triptolide which targets this enzyme. Functionally, ATP-dependent 3'-5' DNA helicase/translocase. Binds dsDNA rather than ssDNA, unzipping it in a translocase rather than classical helicase activity. Component of the general transcription and DNA repair factor IIH (TFIIH) core complex. When complexed to CDK-activating kinase (CAK), involved in RNA transcription by RNA polymerase II. The ATPase activity of XPB/ERCC3, but not its helicase activity, is required for DNA opening; it may wrap around the damaged DNA wedging it open, causing localized melting that allows XPD/ERCC2 helicase to anchor. In transcription, TFIIH has an essential role in transcription initiation. When the pre-initiation complex (PIC) has been established, TFIIH is required for promoter opening and promoter escape. The ATP-dependent helicase activity of XPB/ERCC3 is required for promoter opening and promoter escape. In transcription pre-initiation complexes induces and propagates a DNA twist to open DNA. Also involved in transcription-coupled nucleotide excision repair (NER) of damaged DNA. In NER, TFIIH acts by opening DNA around the lesion to allow the excision of the damaged oligonucleotide and its replacement by a new DNA fragment. The structure of the TFIIH transcription complex differs from the NER-TFIIH complex; large movements by XPD/ERCC2 and XPB/ERCC3 are stabilized by XPA. XPA retains XPB/ERCC3 at the 5' end of a DNA bubble (mimicking DNA damage). This is General transcription and DNA repair factor IIH helicase/translocase subunit XPB from Homo sapiens (Human).